A 712-amino-acid polypeptide reads, in one-letter code: MDELTQANTLAIDEDLVDSVNSVKGWGILKSLNPSYPDISLVENVITFGRLKDSTVHYNDKSISGSHCKITRESNDDDGVVIAFIYDNSTNGTFIDNIKVGKGSRCLLASGQEISLTPQKQLEKIAYIFQTVEKEIEDGGPSNKYFIGEMLGQGNFATVKLAVERTTGVKYAVKIVDKKKYFMNSSARKDSLMDEVNILRGLSHPNIIQIIEVFENEKVLSLILELVECGELLNDIVSNLFYTEDKAKTLFRQIVDGVLYLHNKGIAHRDLKPENILLKHKNFNQNDAIKLTDFGLSRTVSDGSFMKTMCGTPQYLAPEILTSSGGHNGYGLEVDCWSMGAILYIMLCGYPPFDDSREVSIFEQIRNAKFEFDPEDWSSVSEEAKDLIKRLLCVDPHKRYTCNNIIQHPWFNPNVKLSTLLEEDERLRKKAEAEVEANNNNTNKSNSPKMLGKRKSEDGNCSDSNNNNNSGSKSLSSIKSNTTMLDCDEKSNNNNNNGHKKSKSDPTSNNSLFNNDNNNNNNNNNNNNNNNNNNNNNNNNNNNNNNNNNNNNNNNNNNNNNNNNNNNSNDTTDSDTDDETISLPVITKNSKSMSNLQNHLNNNKINSDDESETSTNNNNNNNNNNNNNNNNNNNNNNNNKPSTINNNFPVPFPKSPTKNSPNASPPIKPQNSSNNNSGLAGIDKPKCQYDPNCYRKNPQHLRDFYHTVSSNK.

In terms of domain architecture, FHA spans 46-100 (ITFGRLKDSTVHYNDKSISGSHCKITRESNDDDGVVIAFIYDNSTNGTFIDNIKV). The 267-residue stretch at 145 to 411 (YFIGEMLGQG…CNNIIQHPWF (267 aa)) folds into the Protein kinase domain. ATP-binding positions include 151–159 (LGQGNFATV) and lysine 174. The active-site Proton acceptor is aspartate 270. A coiled-coil region spans residues 414–442 (NVKLSTLLEEDERLRKKAEAEVEANNNNT). A disordered region spans residues 431-695 (AEAEVEANNN…KCQYDPNCYR (265 aa)). Low complexity-rich tracts occupy residues 436–446 (EANNNNTNKSN), 459–481 (GNCS…IKSN), 514–571 (NNDN…SNDT), 595–605 (NLQNHLNNNKI), and 616–639 (NNNN…NNNN). The span at 669–678 (PQNSSNNNSG) shows a compositional bias: polar residues.

It belongs to the protein kinase superfamily. CAMK Ser/Thr protein kinase family. CHK2 subfamily.

It carries out the reaction L-seryl-[protein] + ATP = O-phospho-L-seryl-[protein] + ADP + H(+). The enzyme catalyses L-threonyl-[protein] + ATP = O-phospho-L-threonyl-[protein] + ADP + H(+). This is Probable serine/threonine-protein kinase fhkE (fhkE) from Dictyostelium discoideum (Social amoeba).